Reading from the N-terminus, the 121-residue chain is UPF0102 protein BVU_1879 (121 aa).

The protein belongs to the UPF0102 family.

The polypeptide is UPF0102 protein BVU_1879 (Phocaeicola vulgatus (strain ATCC 8482 / DSM 1447 / JCM 5826 / CCUG 4940 / NBRC 14291 / NCTC 11154) (Bacteroides vulgatus)).